The following is a 121-amino-acid chain: Large ribosomal subunit protein bL20 (121 aa).

The protein belongs to the bacterial ribosomal protein bL20 family.

Binds directly to 23S ribosomal RNA and is necessary for the in vitro assembly process of the 50S ribosomal subunit. It is not involved in the protein synthesizing functions of that subunit. This chain is Large ribosomal subunit protein bL20, found in Polynucleobacter necessarius subsp. necessarius (strain STIR1).